The following is a 500-amino-acid chain: Probable cardiolipin synthase YwiE (500 aa).

Transmembrane regions (helical) follow at residues 6–26 (LEFF…FFPV), 31–51 (FYGG…SLIL), and 59–79 (TLLW…FYLF). 2 PLD phosphodiesterase domains span residues 237 to 264 (LNFR…GKEY) and 413 to 440 (QKGF…DMRS). Residues H242, K244, D249, H418, K420, and D425 contribute to the active site.

Belongs to the phospholipase D family. Cardiolipin synthase subfamily.

The protein resides in the cell membrane. It carries out the reaction 2 a 1,2-diacyl-sn-glycero-3-phospho-(1'-sn-glycerol) = a cardiolipin + glycerol. Its function is as follows. Catalyzes the reversible phosphatidyl group transfer from one phosphatidylglycerol molecule to another to form cardiolipin (CL) (diphosphatidylglycerol) and glycerol. May have a role in the heat shock response since the level of the transcript of ywiE increases after a heat shock. The chain is Probable cardiolipin synthase YwiE (ywiE) from Bacillus subtilis (strain 168).